The sequence spans 528 residues: Dihydromonacolin L monooxygenase LovA (528 aa).

At 1–23 (MTVDALTQPHHLLSLAWNDTQQH) the chain is on the cytoplasmic side. The chain crosses the membrane as a helical; Signal-anchor for type II membrane protein span at residues 24-44 (GSWFAPLVTTSAGLLCLLLYL). Residues 45–528 (CSSGRRSDLP…DEDIRLPGSL (484 aa)) lie on the Lumenal side of the membrane. Residue cysteine 465 coordinates heme.

The protein belongs to the cytochrome P450 family. The cofactor is heme.

Its subcellular location is the membrane. The protein resides in the endoplasmic reticulum membrane. It catalyses the reaction dihydromonacolin L carboxylate + reduced [NADPH--hemoprotein reductase] + O2 = monacolin L carboxylate + oxidized [NADPH--hemoprotein reductase] + 2 H2O + H(+). The catalysed reaction is monacolin L carboxylate + reduced [NADPH--hemoprotein reductase] + O2 = monacolin J carboxylate + oxidized [NADPH--hemoprotein reductase] + H2O + H(+). Its pathway is polyketide biosynthesis; lovastatin biosynthesis. Functionally, dihydromonacolin L monooxygenase; part of the gene cluster that mediates the biosynthesis of lovastatin (also known as mevinolin, mevacor or monacolin K), a hypolipidemic inhibitor of (3S)-hydroxymethylglutaryl-coenzyme A (HMG-CoA) reductase (HMGR). The first step in the biosynthesis of lovastatin is the production of dihydromonacolin L acid by the lovastatin nonaketide synthase lovB and the trans-acting enoyl reductase lovC via condensation of one acetyl-CoA unit and 8 malonyl-CoA units. Dihydromonacolin L acid is released from lovB by the thioesterase lovG. Next, dihydromonacolin L acid is oxidized by the dihydromonacolin L monooxygenase lovA twice to form monacolin J acid. The 2-methylbutyrate moiety of lovastatin is synthesized by the lovastatin diketide synthase lovF via condensation of one acetyl-CoA unit and one malonyl-CoA unit. Finally, the covalent attachment of this moiety to monacolin J acid is catalyzed by the transesterase lovD to yield lovastatin. LovD has broad substrate specificity and can also convert monacolin J to simvastatin using alpha-dimethylbutanoyl-S-methyl-3-mercaptopropionate (DMB-S-MMP) as the thioester acyl donor, and can also catalyze the reverse reaction and function as hydrolase in vitro. LovD has much higher activity with LovF-bound 2-methylbutanoate than with free diketide substrates. This is Dihydromonacolin L monooxygenase LovA from Aspergillus terreus.